The chain runs to 102 residues: Thioredoxin (102 aa).

In terms of domain architecture, Thioredoxin spans 1–102 (MVKVVSAENF…SLIRLINQHS (102 aa)). A disulfide bridge connects residues Cys28 and Cys31.

Belongs to the thioredoxin family.

Functionally, participates in various redox reactions through the reversible oxidation of its active center dithiol to a disulfide and catalyzes dithiol-disulfide exchange reactions. In Chlamydia caviae (strain ATCC VR-813 / DSM 19441 / 03DC25 / GPIC) (Chlamydophila caviae), this protein is Thioredoxin (trxA).